A 398-amino-acid polypeptide reads, in one-letter code: Cell adhesion molecule 3 (398 aa).

The signal sequence occupies residues 1-24 (MGAPAASLLLLLLLFACCWAPGGA). An Ig-like V-type domain is found at 25–126 (NLSQDDSQPW…VRTAKSLVTV (102 aa)). At 25–330 (NLSQDDSQPW…PVPSSSSTYH (306 aa)) the chain is on the extracellular side. 3 disulfides stabilise this stretch: Cys-50–Cys-110, Cys-152–Cys-209, and Cys-254–Cys-299. Ig-like C2-type domains follow at residues 130-228 (PQKP…QRIE) and 233-315 (PTAM…YTLN). Asn-290 carries an N-linked (GlcNAc...) asparagine glycan. The helical transmembrane segment at 331–351 (AIIGGIVAFIVFLLLIMLIFL) threads the bilayer. The Cytoplasmic portion of the chain corresponds to 352–398 (GHYLIRHKGTYLTHEAKGSDDAPDADTAIINAEGGQSGGDDKKEYFI). The segment at 367-398 (AKGSDDAPDADTAIINAEGGQSGGDDKKEYFI) is disordered. Ser-388 bears the Phosphoserine mark.

The protein belongs to the nectin family. In terms of assembly, homodimer. Can form trans-heterodimers with NECTIN3. Interacts with EPB41L1, DLG3, PALS2 and CASK. Isoform 1 is expressed mainly in adult and fetal brain. Isoform 2 is highly expressed in adult brain and weakly expressed in placenta. In brain, Isoform 2 is highly expressed in cerebellum.

It localises to the cell membrane. The protein resides in the cell junction. In terms of biological role, involved in cell-cell adhesion. Has both calcium-independent homophilic cell-cell adhesion activity and calcium-independent heterophilic cell-cell adhesion activity with IGSF4, NECTIN1 and NECTIN3. Interaction with EPB41L1 may regulate structure or function of cell-cell junctions. The sequence is that of Cell adhesion molecule 3 (CADM3) from Homo sapiens (Human).